Reading from the N-terminus, the 69-residue chain is UPF0291 protein CD630_10710 (69 aa).

This sequence belongs to the UPF0291 family.

The protein resides in the cytoplasm. This Clostridioides difficile (strain 630) (Peptoclostridium difficile) protein is UPF0291 protein CD630_10710.